A 252-amino-acid chain; its full sequence is Receptor expression-enhancing protein 3-B (252 aa).

3 helical membrane passes run Met1–Tyr21, Tyr35–Ala55, and Leu57–Leu77. Positions Glu163–Ser225 are disordered. The span at Arg198–Val211 shows a compositional bias: acidic residues.

This sequence belongs to the DP1 family.

The protein resides in the endoplasmic reticulum membrane. Functionally, microtubule-binding protein required to ensure proper cell division and nuclear envelope reassembly by sequestering the endoplasmic reticulum away from chromosomes during mitosis. Probably acts by clearing the endoplasmic reticulum membrane from metaphase chromosomes. In Xenopus laevis (African clawed frog), this protein is Receptor expression-enhancing protein 3-B (reep3-b).